The primary structure comprises 947 residues: Protein NETWORKED 2D (947 aa).

One can recognise an NAB domain in the interval 10–90; sequence YSWWWASHIR…ERYDHISTEL (81 aa). 3 coiled-coil regions span residues 176 to 205, 247 to 342, and 375 to 433; these read KPEAMGEIDKLQKEILALQTEKEFVKSSYE, MTET…HFES, and TALI…VLDK. 2 disordered regions span residues 455–555 and 580–620; these read NLHE…DKTD and EKQG…GEPD. A compositionally biased stretch (basic and acidic residues) spans 474 to 514; the sequence is PQKDLEGEKRTLDISEEIKEHQKETGEEKKEAPVKSVKFEQ. Residues 525 to 536 show a composition bias toward polar residues; it reads TIPSTNPDTVLE. Basic and acidic residues-rich tracts occupy residues 537-555, 580-589, and 610-620; these read STEKVDSDLEKQDASDKTD, EKQGESDKID, and EDQKEKEGEPD. Coiled-coil stretches lie at residues 645–684 and 744–773; these read RNFKDMKKTLDETKTKMKTENATKDDEIKLLREKMSLLQK and GQIQSYDTSIEDLQAEISKLEQRRKQDGSS.

Belongs to the NET family.

Its function is as follows. Plant-specific actin binding protein. May be part of a membrane-cytoskeletal adapter complex. In Arabidopsis thaliana (Mouse-ear cress), this protein is Protein NETWORKED 2D.